A 656-amino-acid polypeptide reads, in one-letter code: uncharacterized protein (656 aa).

The next 3 helical transmembrane spans lie at 7–27 (QQVL…LNHL), 40–60 (LMAM…FWTL), and 210–230 (AVFI…AFTI). One can recognise an HAMP domain in the interval 231-280 (TRPIRELLTGVKNIASGDFYQRIDLPFGGELGALIFNFNEMAERLEKYEQ). One can recognise a PAS domain in the interval 289–359 (EKAKLETLVS…PILNDIIRKN (71 aa)). The Histidine kinase domain occupies 424–654 (NVSHELRTPL…CFFFDLMIAK (231 aa)). A Phosphohistidine; by autocatalysis modification is found at H427.

Its subcellular location is the plastid. The protein localises to the chloroplast membrane. The catalysed reaction is ATP + protein L-histidine = ADP + protein N-phospho-L-histidine.. This is an uncharacterized protein from Porphyra purpurea (Red seaweed).